We begin with the raw amino-acid sequence, 150 residues long: MVADAVAKVCGSEAIKANLRRSWGVLSADIEATGLMLMSNLFTLRPDTKTYFTRLGDVQKGKANSKLRGHAITLTYALNNFVDSLDDPSRLKCVVEKFAVNHINRKISGDAFGAIVEPMKETLKARMGNYYSDDVAGAWAALVGVVQAAL.

V2 is modified (blocked amino end (Val)). Residues 10 to 150 form the Globin domain; sequence CGSEAIKANL…ALVGVVQAAL (141 aa). A heme b-binding site is contributed by H102.

The protein belongs to the globin family. As to quaternary structure, heterotetramer of two alpha chains and two beta chains.

This chain is Globin-2 A chain, found in Anadara inaequivalvis (Inequivalve ark).